We begin with the raw amino-acid sequence, 24 residues long: Cytochrome c oxidase subunit 7A2, mitochondrial (24 aa).

Residues 1–13 (FENKVPEKQKLFQ) show a composition bias toward basic and acidic residues. The tract at residues 1–24 (FENKVPEKQKLFQEDNGIPVHLKG) is disordered. K10 is subject to N6-acetyllysine.

The protein belongs to the cytochrome c oxidase VIIa family. In terms of assembly, component of the cytochrome c oxidase (complex IV, CIV), a multisubunit enzyme composed of 14 subunits. The complex is composed of a catalytic core of 3 subunits MT-CO1, MT-CO2 and MT-CO3, encoded in the mitochondrial DNA, and 11 supernumerary subunits COX4I, COX5A, COX5B, COX6A, COX6B, COX6C, COX7A, COX7B, COX7C, COX8 and NDUFA4, which are encoded in the nuclear genome. The complex exists as a monomer or a dimer and forms supercomplexes (SCs) in the inner mitochondrial membrane with NADH-ubiquinone oxidoreductase (complex I, CI) and ubiquinol-cytochrome c oxidoreductase (cytochrome b-c1 complex, complex III, CIII), resulting in different assemblies (supercomplex SCI(1)III(2)IV(1) and megacomplex MCI(2)III(2)IV(2)). Interacts with PET100.

It localises to the mitochondrion inner membrane. It participates in energy metabolism; oxidative phosphorylation. In terms of biological role, component of the cytochrome c oxidase, the last enzyme in the mitochondrial electron transport chain which drives oxidative phosphorylation. The respiratory chain contains 3 multisubunit complexes succinate dehydrogenase (complex II, CII), ubiquinol-cytochrome c oxidoreductase (cytochrome b-c1 complex, complex III, CIII) and cytochrome c oxidase (complex IV, CIV), that cooperate to transfer electrons derived from NADH and succinate to molecular oxygen, creating an electrochemical gradient over the inner membrane that drives transmembrane transport and the ATP synthase. Cytochrome c oxidase is the component of the respiratory chain that catalyzes the reduction of oxygen to water. Electrons originating from reduced cytochrome c in the intermembrane space (IMS) are transferred via the dinuclear copper A center (CU(A)) of subunit 2 and heme A of subunit 1 to the active site in subunit 1, a binuclear center (BNC) formed by heme A3 and copper B (CU(B)). The BNC reduces molecular oxygen to 2 water molecules using 4 electrons from cytochrome c in the IMS and 4 protons from the mitochondrial matrix. The polypeptide is Cytochrome c oxidase subunit 7A2, mitochondrial (COX7A2) (Ovis aries (Sheep)).